We begin with the raw amino-acid sequence, 448 residues long: tRNA-2-methylthio-N(6)-dimethylallyladenosine synthase (448 aa).

Residues 2-119 form the MTTase N-terminal domain; the sequence is KKLYIKTFGC…LSDLIAKRRE (118 aa). 6 residues coordinate [4Fe-4S] cluster: Cys-11, Cys-48, Cys-82, Cys-156, Cys-160, and Cys-163. The Radical SAM core domain maps to 142–377; sequence RQTRGSAYVS…LVESQANQIS (236 aa). One can recognise a TRAM domain in the interval 378–444; it reads QKMLGNIERV…NYTLRGKLVE (67 aa).

It belongs to the methylthiotransferase family. MiaB subfamily. As to quaternary structure, monomer. [4Fe-4S] cluster serves as cofactor.

Its subcellular location is the cytoplasm. It catalyses the reaction N(6)-dimethylallyladenosine(37) in tRNA + (sulfur carrier)-SH + AH2 + 2 S-adenosyl-L-methionine = 2-methylsulfanyl-N(6)-dimethylallyladenosine(37) in tRNA + (sulfur carrier)-H + 5'-deoxyadenosine + L-methionine + A + S-adenosyl-L-homocysteine + 2 H(+). Functionally, catalyzes the methylthiolation of N6-(dimethylallyl)adenosine (i(6)A), leading to the formation of 2-methylthio-N6-(dimethylallyl)adenosine (ms(2)i(6)A) at position 37 in tRNAs that read codons beginning with uridine. The polypeptide is tRNA-2-methylthio-N(6)-dimethylallyladenosine synthase (Polynucleobacter necessarius subsp. necessarius (strain STIR1)).